The primary structure comprises 316 residues: Pantothenate kinase (316 aa).

95-102 (GSVAVGKS) contacts ATP.

The protein belongs to the prokaryotic pantothenate kinase family.

It is found in the cytoplasm. It carries out the reaction (R)-pantothenate + ATP = (R)-4'-phosphopantothenate + ADP + H(+). Its pathway is cofactor biosynthesis; coenzyme A biosynthesis; CoA from (R)-pantothenate: step 1/5. The sequence is that of Pantothenate kinase from Erwinia tasmaniensis (strain DSM 17950 / CFBP 7177 / CIP 109463 / NCPPB 4357 / Et1/99).